Consider the following 453-residue polypeptide: Ribulose bisphosphate carboxylase large chain (453 aa).

The propeptide occupies Met1 to Ser2. Pro3 bears the N-acetylproline mark. Lys14 bears the N6,N6,N6-trimethyllysine mark. 2 residues coordinate substrate: Asn123 and Thr173. The Proton acceptor role is filled by Lys175. Lys177 contributes to the substrate binding site. Lys201, Asp203, and Glu204 together coordinate Mg(2+). An N6-carboxylysine modification is found at Lys201. His294 (proton acceptor) is an active-site residue. The substrate site is built by Arg295, His327, and Ser379.

Belongs to the RuBisCO large chain family. Type I subfamily. In terms of assembly, heterohexadecamer of 8 large chains and 8 small chains; disulfide-linked. The disulfide link is formed within the large subunit homodimers. The cofactor is Mg(2+). Post-translationally, the disulfide bond which can form in the large chain dimeric partners within the hexadecamer appears to be associated with oxidative stress and protein turnover.

Its subcellular location is the plastid. The protein resides in the chloroplast. It catalyses the reaction 2 (2R)-3-phosphoglycerate + 2 H(+) = D-ribulose 1,5-bisphosphate + CO2 + H2O. It carries out the reaction D-ribulose 1,5-bisphosphate + O2 = 2-phosphoglycolate + (2R)-3-phosphoglycerate + 2 H(+). Its function is as follows. RuBisCO catalyzes two reactions: the carboxylation of D-ribulose 1,5-bisphosphate, the primary event in carbon dioxide fixation, as well as the oxidative fragmentation of the pentose substrate in the photorespiration process. Both reactions occur simultaneously and in competition at the same active site. In Asperula laevigata (Smooth woodruff), this protein is Ribulose bisphosphate carboxylase large chain.